The chain runs to 121 residues: Large ribosomal subunit protein uL18 (121 aa).

It belongs to the universal ribosomal protein uL18 family. Part of the 50S ribosomal subunit; part of the 5S rRNA/L5/L18/L25 subcomplex. Contacts the 5S and 23S rRNAs.

This is one of the proteins that bind and probably mediate the attachment of the 5S RNA into the large ribosomal subunit, where it forms part of the central protuberance. The polypeptide is Large ribosomal subunit protein uL18 (Herpetosiphon aurantiacus (strain ATCC 23779 / DSM 785 / 114-95)).